Consider the following 333-residue polypeptide: Adenosine deaminase (333 aa).

Positions 12 and 14 each coordinate Zn(2+). Residues His14, Asp16, and Gly170 each coordinate substrate. Residue His197 participates in Zn(2+) binding. Catalysis depends on Glu200, which acts as the Proton donor. Asp278 serves as a coordination point for Zn(2+). Asp279 lines the substrate pocket.

The protein belongs to the metallo-dependent hydrolases superfamily. Adenosine and AMP deaminases family. Adenosine deaminase subfamily. The cofactor is Zn(2+).

The enzyme catalyses adenosine + H2O + H(+) = inosine + NH4(+). The catalysed reaction is 2'-deoxyadenosine + H2O + H(+) = 2'-deoxyinosine + NH4(+). Its function is as follows. Catalyzes the hydrolytic deamination of adenosine and 2-deoxyadenosine. The chain is Adenosine deaminase from Shigella boydii serotype 4 (strain Sb227).